A 224-amino-acid chain; its full sequence is Response regulator protein GraR (224 aa).

Residues 2 to 115 enclose the Response regulatory domain; sequence QILLVEDDNT…VLIAKLQAIY (114 aa). 4-aspartylphosphate is present on D51. The segment at residues 126-224 is a DNA-binding region (ompR/PhoB-type); it reads KRTLTWQDAV…KVGKGYMAHE (99 aa). 3 positions are modified to phosphothreonine: T128, T130, and T149.

As to quaternary structure, interacts with GraX. Phosphorylated by GraS. Phosphorylated by Stk1; phosphorylation increases the DNA-binding activity of GraR.

It localises to the cytoplasm. In terms of biological role, member of the two-component regulatory system GraR/GraS involved in resistance against cationic antimicrobial peptides (CAMPs). Upon phosphorylation by GraS, functions as a transcription regulator by direct binding to promoter regions of target genes such as adhesins, exoproteins, transporters, toxins, and proteins involved in cell wall synthesis. Down-regulates the expression of many genes involved in RNA and amino acid synthesis or glycolysis. This Staphylococcus aureus (strain Mu3 / ATCC 700698) protein is Response regulator protein GraR (graR).